Reading from the N-terminus, the 130-residue chain is Transcription antitermination protein NusB (130 aa).

This sequence belongs to the NusB family.

Functionally, involved in transcription antitermination. Required for transcription of ribosomal RNA (rRNA) genes. Binds specifically to the boxA antiterminator sequence of the ribosomal RNA (rrn) operons. This is Transcription antitermination protein NusB from Bacillus cereus (strain B4264).